A 184-amino-acid polypeptide reads, in one-letter code: UPF0316 protein YebE (184 aa).

The next 3 membrane-spanning stretches (helical) occupy residues 9–29 (GIAM…FFTI), 41–61 (LAAG…SLVL), and 67–87 (IQNV…GMKI).

The protein belongs to the UPF0316 family.

Its subcellular location is the cell membrane. This Bacillus subtilis (strain 168) protein is UPF0316 protein YebE (yebE).